We begin with the raw amino-acid sequence, 877 residues long: Telomere length regulation protein clk-2 (877 aa).

A compositionally biased stretch (polar residues) spans 488 to 501; it reads NKDSAAITSKNNLR. Residues 488 to 509 are disordered; it reads NKDSAAITSKNNLRLDSDDDED.

Belongs to the TEL2 family.

It is found in the nucleus. It localises to the chromosome. Its subcellular location is the telomere. Functionally, DNA damage checkpoint protein required for DNA damage-induced cell cycle arrest and apoptosis, thereby playing a role in genome stability. Regulator of telomere length. This Caenorhabditis elegans protein is Telomere length regulation protein clk-2 (clk-2).